We begin with the raw amino-acid sequence, 125 residues long: Protein ApaG (125 aa).

The 125-residue stretch at 1-125 folds into the ApaG domain; that stretch reads MFTSSKVAIQ…FRLAIPTLIN (125 aa).

This chain is Protein ApaG, found in Proteus mirabilis (strain HI4320).